We begin with the raw amino-acid sequence, 305 residues long: Carbamate kinase (305 aa).

The protein belongs to the carbamate kinase family.

The protein localises to the cytoplasm. The catalysed reaction is hydrogencarbonate + NH4(+) + ATP = carbamoyl phosphate + ADP + H2O + H(+). It participates in metabolic intermediate metabolism; carbamoyl phosphate degradation; CO(2) and NH(3) from carbamoyl phosphate: step 1/1. The chain is Carbamate kinase (arcC) from Thermoplasma volcanium (strain ATCC 51530 / DSM 4299 / JCM 9571 / NBRC 15438 / GSS1).